The following is a 35-amino-acid chain: Photosystem II reaction center protein M (35 aa).

Residues 5 to 25 form a helical membrane-spanning segment; that stretch reads ILAFVATALFILIPTAFLLIL.

This sequence belongs to the PsbM family. PSII is composed of 1 copy each of membrane proteins PsbA, PsbB, PsbC, PsbD, PsbE, PsbF, PsbH, PsbI, PsbJ, PsbK, PsbL, PsbM, PsbT, PsbX, PsbY, PsbZ, Psb30/Ycf12, at least 3 peripheral proteins of the oxygen-evolving complex and a large number of cofactors. It forms dimeric complexes.

The protein localises to the plastid. The protein resides in the chloroplast thylakoid membrane. Its function is as follows. One of the components of the core complex of photosystem II (PSII). PSII is a light-driven water:plastoquinone oxidoreductase that uses light energy to abstract electrons from H(2)O, generating O(2) and a proton gradient subsequently used for ATP formation. It consists of a core antenna complex that captures photons, and an electron transfer chain that converts photonic excitation into a charge separation. This subunit is found at the monomer-monomer interface. The polypeptide is Photosystem II reaction center protein M (Adiantum capillus-veneris (Maidenhair fern)).